A 615-amino-acid polypeptide reads, in one-letter code: DNA mismatch repair protein MutL (615 aa).

The interval 362 to 397 (HFAEPAVREPVAPRYTPAPASGSRPAAPWPNAQPGY) is disordered. The span at 378-391 (PAPASGSRPAAPWP) shows a compositional bias: low complexity.

The protein belongs to the DNA mismatch repair MutL/HexB family.

Its function is as follows. This protein is involved in the repair of mismatches in DNA. It is required for dam-dependent methyl-directed DNA mismatch repair. May act as a 'molecular matchmaker', a protein that promotes the formation of a stable complex between two or more DNA-binding proteins in an ATP-dependent manner without itself being part of a final effector complex. In Escherichia coli O17:K52:H18 (strain UMN026 / ExPEC), this protein is DNA mismatch repair protein MutL.